The following is a 423-amino-acid chain: UDP-N-acetylglucosamine 1-carboxyvinyltransferase (423 aa).

Residue 21-22 (KN) participates in phosphoenolpyruvate binding. R92 contacts UDP-N-acetyl-alpha-D-glucosamine. Catalysis depends on C116, which acts as the Proton donor. C116 carries the 2-(S-cysteinyl)pyruvic acid O-phosphothioketal modification. D305 and V327 together coordinate UDP-N-acetyl-alpha-D-glucosamine.

Belongs to the EPSP synthase family. MurA subfamily.

It localises to the cytoplasm. It carries out the reaction phosphoenolpyruvate + UDP-N-acetyl-alpha-D-glucosamine = UDP-N-acetyl-3-O-(1-carboxyvinyl)-alpha-D-glucosamine + phosphate. It functions in the pathway cell wall biogenesis; peptidoglycan biosynthesis. Its function is as follows. Cell wall formation. Adds enolpyruvyl to UDP-N-acetylglucosamine. The sequence is that of UDP-N-acetylglucosamine 1-carboxyvinyltransferase from Fervidobacterium nodosum (strain ATCC 35602 / DSM 5306 / Rt17-B1).